The primary structure comprises 1295 residues: Phosphoribosylformylglycinamidine synthase (1295 aa).

The interval 305–327 is disordered; it reads WPGAATGSGGEIRDEGATGRGAK. Residues 307 to 318 and alanine 678 contribute to the ATP site; that span reads GAATGSGGEIRD. Mg(2+) is bound by residues glutamate 718, asparagine 722, and aspartate 884. Serine 886 contacts ATP. In terms of domain architecture, Glutamine amidotransferase type-1 spans 1042–1295; that stretch reads VAVLREQGVN…IFRNARKQLG (254 aa). Cysteine 1135 (nucleophile) is an active-site residue. Active-site residues include histidine 1260 and glutamate 1262.

In the N-terminal section; belongs to the FGAMS family. Monomer.

It localises to the cytoplasm. It carries out the reaction N(2)-formyl-N(1)-(5-phospho-beta-D-ribosyl)glycinamide + L-glutamine + ATP + H2O = 2-formamido-N(1)-(5-O-phospho-beta-D-ribosyl)acetamidine + L-glutamate + ADP + phosphate + H(+). It functions in the pathway purine metabolism; IMP biosynthesis via de novo pathway; 5-amino-1-(5-phospho-D-ribosyl)imidazole from N(2)-formyl-N(1)-(5-phospho-D-ribosyl)glycinamide: step 1/2. In terms of biological role, phosphoribosylformylglycinamidine synthase involved in the purines biosynthetic pathway. Catalyzes the ATP-dependent conversion of formylglycinamide ribonucleotide (FGAR) and glutamine to yield formylglycinamidine ribonucleotide (FGAM) and glutamate. This Shigella boydii serotype 4 (strain Sb227) protein is Phosphoribosylformylglycinamidine synthase.